Here is a 317-residue protein sequence, read N- to C-terminus: Beta-ketoacyl-[acyl-carrier-protein] synthase III (317 aa).

Catalysis depends on residues cysteine 112 and histidine 244. The interval 245–249 (QANLR) is ACP-binding. The active site involves asparagine 274.

It belongs to the thiolase-like superfamily. FabH family. As to quaternary structure, homodimer.

The protein localises to the cytoplasm. The catalysed reaction is malonyl-[ACP] + acetyl-CoA + H(+) = 3-oxobutanoyl-[ACP] + CO2 + CoA. The protein operates within lipid metabolism; fatty acid biosynthesis. In terms of biological role, catalyzes the condensation reaction of fatty acid synthesis by the addition to an acyl acceptor of two carbons from malonyl-ACP. Catalyzes the first condensation reaction which initiates fatty acid synthesis and may therefore play a role in governing the total rate of fatty acid production. Possesses both acetoacetyl-ACP synthase and acetyl transacylase activities. Its substrate specificity determines the biosynthesis of branched-chain and/or straight-chain of fatty acids. This chain is Beta-ketoacyl-[acyl-carrier-protein] synthase III, found in Pasteurella multocida (strain Pm70).